Reading from the N-terminus, the 179-residue chain is Large ribosomal subunit protein uL6 (179 aa).

It belongs to the universal ribosomal protein uL6 family. Part of the 50S ribosomal subunit.

Functionally, this protein binds to the 23S rRNA, and is important in its secondary structure. It is located near the subunit interface in the base of the L7/L12 stalk, and near the tRNA binding site of the peptidyltransferase center. This Syntrophomonas wolfei subsp. wolfei (strain DSM 2245B / Goettingen) protein is Large ribosomal subunit protein uL6.